The primary structure comprises 148 residues: Large ribosomal subunit protein bL9 (148 aa).

It belongs to the bacterial ribosomal protein bL9 family.

Functionally, binds to the 23S rRNA. This Geobacter metallireducens (strain ATCC 53774 / DSM 7210 / GS-15) protein is Large ribosomal subunit protein bL9.